The chain runs to 124 residues: Histone H2A (124 aa).

Over residues 1 to 18 (MSGRGKGGKVKGKAKSRS) the composition is skewed to basic residues. The tract at residues 1-21 (MSGRGKGGKVKGKAKSRSNRA) is disordered. The residue at position 2 (Ser-2) is an N-acetylserine. Ser-2 is modified (phosphoserine). The residue at position 36 (Lys-36) is an N6-succinyllysine. The residue at position 104 (Gln-104) is an N5-methylglutamine. Lys-119 is covalently cross-linked (Glycyl lysine isopeptide (Lys-Gly) (interchain with G-Cter in ubiquitin)). Residue Thr-120 is modified to Phosphothreonine.

The protein belongs to the histone H2A family. The nucleosome is a histone octamer containing two molecules each of H2A, H2B, H3 and H4 assembled in one H3-H4 heterotetramer and two H2A-H2B heterodimers. The octamer wraps approximately 147 bp of DNA. Post-translationally, the chromatin-associated form, but not the free cytoplasmic form, is phosphorylated on Thr-120 by NHK-1 during mitosis, and dephosphorylated during S-phase. Also phosphorylated on Thr-120 by NHK-1 during prophase I of meiosis; which is required for acetylation of H3 'Lys-14' and H4 'Lys-5', diassembly of the synaptonemal complex, and karyosome formation. In terms of processing, monoubiquitination of Lys-119 by sce/dRING gives a specific tag for epigenetic transcriptional repression. Phosphorylation on Ser-2 is enhanced during mitosis. Phosphorylation on Ser-2 directly represses transcription.

The protein resides in the nucleus. It localises to the chromosome. Core component of nucleosome. Nucleosomes wrap and compact DNA into chromatin, limiting DNA accessibility to the cellular machineries which require DNA as a template. Histones thereby play a central role in transcription regulation, DNA repair, DNA replication and chromosomal stability. DNA accessibility is regulated via a complex set of post-translational modifications of histones, also called histone code, and nucleosome remodeling. This is Histone H2A (His2A) from Drosophila erecta (Fruit fly).